Consider the following 207-residue polypeptide: Small ribosomal subunit protein uS4 (207 aa).

Over residues 31–40 the composition is skewed to basic and acidic residues; sequence KCRLDNKPGQ. The interval 31–56 is disordered; the sequence is KCRLDNKPGQDGRTSGSRTSDYGNQL. Positions 42 to 53 are enriched in polar residues; it reads GRTSGSRTSDYG. Positions 97 to 158 constitute an S4 RNA-binding domain; it reads SRLDNVVYRM…KAKKQARITE (62 aa).

The protein belongs to the universal ribosomal protein uS4 family. As to quaternary structure, part of the 30S ribosomal subunit. Contacts protein S5. The interaction surface between S4 and S5 is involved in control of translational fidelity.

Its function is as follows. One of the primary rRNA binding proteins, it binds directly to 16S rRNA where it nucleates assembly of the body of the 30S subunit. Functionally, with S5 and S12 plays an important role in translational accuracy. The polypeptide is Small ribosomal subunit protein uS4 (Polynucleobacter necessarius subsp. necessarius (strain STIR1)).